The chain runs to 431 residues: Teosinte glume architecture 1 (431 aa).

Disordered stretches follow at residues 18–55 (QDHA…GAPA) and 68–102 (ECEP…QQCP). Residues 21 to 41 (AAAAPSSGGHAANAAAAGTGT) show a composition bias toward low complexity. The SBP-type zinc finger occupies 101–178 (CPSCAVDGCR…DGHNRRRRKP (78 aa)). Residues C104, C109, C126, H129, C145, C148, H152, and C164 each coordinate Zn(2+). A compositionally biased stretch (gly residues) spans 408–419 (GGGSGGGEGSSD). The tract at residues 408 to 431 (GGGSGGGEGSSDGGTSSSMPFSWQ) is disordered.

In terms of assembly, monomer and homodimer. Strongly expressed in immature ears and weakly in husks. Found in the inflorescence meristem of the developing ear, in the spikelet pair primordia, the glume primordia, the cupule forming region and other floral organs. Not detected in other tissues.

Functionally, SBP transcriptional regulator probably involved in the domestication of maize. Acts as a transcriptional repressor binding to a 5'-GTAC-3' motif. May repress the growth of lateral branches in length and numbers. The chain is Teosinte glume architecture 1 from Zea mays (Maize).